Consider the following 387-residue polypeptide: Patatin group D-3 (387 aa).

Residues 1–23 (MATTKSFLILIVMILATTSSTFA) form the signal peptide. Positions 32-230 (LSIDGGGIKG…TVADPALLSI (199 aa)) constitute a PNPLA domain. The short motif at 36 to 41 (GGGIKG) is the GXGXXG element. The short motif at 75–79 (GTSTG) is the GXSXG element. Catalysis depends on S77, which acts as the Nucleophile. N115 carries N-linked (GlcNAc...) asparagine glycosylation. The Proton acceptor role is filled by D216. The DGA/G signature appears at 216-218 (DGA). A coiled-coil region spans residues 361 to 385 (ETYEEALKRFAKLLSDRKKLRANKA).

Belongs to the patatin family. Tuber.

The protein localises to the vacuole. In terms of biological role, probable lipolytic acyl hydrolase (LAH), an activity which is thought to be involved in the response of tubers to pathogens. The sequence is that of Patatin group D-3 from Solanum tuberosum (Potato).